The chain runs to 301 residues: tRNA-cytidine(32) 2-sulfurtransferase (301 aa).

Positions Ser-55 to Ser-60 match the PP-loop motif motif. [4Fe-4S] cluster is bound by residues Cys-130, Cys-133, and Cys-221.

Belongs to the TtcA family. In terms of assembly, homodimer. It depends on Mg(2+) as a cofactor. Requires [4Fe-4S] cluster as cofactor.

The protein localises to the cytoplasm. It catalyses the reaction cytidine(32) in tRNA + S-sulfanyl-L-cysteinyl-[cysteine desulfurase] + AH2 + ATP = 2-thiocytidine(32) in tRNA + L-cysteinyl-[cysteine desulfurase] + A + AMP + diphosphate + H(+). It functions in the pathway tRNA modification. In terms of biological role, catalyzes the ATP-dependent 2-thiolation of cytidine in position 32 of tRNA, to form 2-thiocytidine (s(2)C32). The sulfur atoms are provided by the cysteine/cysteine desulfurase (IscS) system. This chain is tRNA-cytidine(32) 2-sulfurtransferase, found in Acinetobacter baumannii (strain AB307-0294).